Consider the following 429-residue polypeptide: Adenylosuccinate synthetase (429 aa).

Residues 12–18 (GDEGKGK) and 40–42 (GHT) contribute to the GTP site. Residue Asp13 is the Proton acceptor of the active site. Residues Asp13 and Gly40 each coordinate Mg(2+). IMP contacts are provided by residues 13-16 (DEGK), 38-41 (NAGH), Thr129, Arg143, Gln223, Thr238, and Arg302. His41 serves as the catalytic Proton donor. 298-304 (TVTGRPR) contacts substrate. Residues Arg304, 330–332 (KLD), and 412–414 (STS) each bind GTP.

Belongs to the adenylosuccinate synthetase family. Homodimer. Mg(2+) serves as cofactor.

It localises to the cytoplasm. It carries out the reaction IMP + L-aspartate + GTP = N(6)-(1,2-dicarboxyethyl)-AMP + GDP + phosphate + 2 H(+). The protein operates within purine metabolism; AMP biosynthesis via de novo pathway; AMP from IMP: step 1/2. Its function is as follows. Plays an important role in the de novo pathway of purine nucleotide biosynthesis. Catalyzes the first committed step in the biosynthesis of AMP from IMP. This is Adenylosuccinate synthetase from Rhodospirillum rubrum (strain ATCC 11170 / ATH 1.1.1 / DSM 467 / LMG 4362 / NCIMB 8255 / S1).